The chain runs to 86 residues: Latartoxin-1b (86 aa).

Positions methionine 1–serine 19 are cleaved as a signal peptide. Positions alanine 20–arginine 26 are cleaved as a propeptide — removed in mature form. Residues glutamate 23–arginine 26 carry the Processing quadruplet motif motif. 4 disulfides stabilise this stretch: cysteine 28–cysteine 43, cysteine 35–cysteine 48, cysteine 42–cysteine 65, and cysteine 50–cysteine 63.

Belongs to the neurotoxin 19 (CSTX) family. Post-translationally, contains 4 disulfide bonds. Cleavage of the propeptide depends on the processing quadruplet motif (XXXR, with at least one of X being E). In terms of tissue distribution, expressed by the venom gland.

It localises to the secreted. In terms of biological role, insect toxin. This chain is Latartoxin-1b, found in Lachesana tarabaevi (Spider).